The chain runs to 341 residues: Anthranilate phosphoribosyltransferase (341 aa).

Residues Gly79, 82–83 (GD), Thr87, 89–92 (NIST), 107–115 (KHGNRAVSS), and Ser119 contribute to the 5-phospho-alpha-D-ribose 1-diphosphate site. Gly79 serves as a coordination point for anthranilate. Position 91 (Ser91) interacts with Mg(2+). Asn110 is an anthranilate binding site. Residue Arg165 participates in anthranilate binding. Residues Asp224 and Glu225 each contribute to the Mg(2+) site.

It belongs to the anthranilate phosphoribosyltransferase family. Homodimer. The cofactor is Mg(2+).

It catalyses the reaction N-(5-phospho-beta-D-ribosyl)anthranilate + diphosphate = 5-phospho-alpha-D-ribose 1-diphosphate + anthranilate. The protein operates within amino-acid biosynthesis; L-tryptophan biosynthesis; L-tryptophan from chorismate: step 2/5. In terms of biological role, catalyzes the transfer of the phosphoribosyl group of 5-phosphorylribose-1-pyrophosphate (PRPP) to anthranilate to yield N-(5'-phosphoribosyl)-anthranilate (PRA). The polypeptide is Anthranilate phosphoribosyltransferase (Bacillus cereus (strain ATCC 14579 / DSM 31 / CCUG 7414 / JCM 2152 / NBRC 15305 / NCIMB 9373 / NCTC 2599 / NRRL B-3711)).